Reading from the N-terminus, the 179-residue chain is NADH dehydrogenase [ubiquinone] 1 beta subcomplex subunit 9 (179 aa).

A2 is modified (N-acetylalanine). At S85 the chain carries Phosphoserine. The disordered stretch occupies residues 136-162 (EVKQLQEETPPGGPLTEALPPARKEGD).

Belongs to the complex I LYR family. Mammalian complex I is composed of 45 different subunits.

Its subcellular location is the mitochondrion inner membrane. Its function is as follows. Accessory subunit of the mitochondrial membrane respiratory chain NADH dehydrogenase (Complex I), that is believed to be not involved in catalysis. Complex I functions in the transfer of electrons from NADH to the respiratory chain. The immediate electron acceptor for the enzyme is believed to be ubiquinone. The polypeptide is NADH dehydrogenase [ubiquinone] 1 beta subcomplex subunit 9 (NDUFB9) (Pan troglodytes (Chimpanzee)).